The chain runs to 517 residues: ATP synthase subunit alpha 1 (517 aa).

Gly-174–Thr-181 is an ATP binding site.

This sequence belongs to the ATPase alpha/beta chains family. F-type ATPases have 2 components, CF(1) - the catalytic core - and CF(0) - the membrane proton channel. CF(1) has five subunits: alpha(3), beta(3), gamma(1), delta(1), epsilon(1). CF(0) has three main subunits: a(1), b(2) and c(9-12). The alpha and beta chains form an alternating ring which encloses part of the gamma chain. CF(1) is attached to CF(0) by a central stalk formed by the gamma and epsilon chains, while a peripheral stalk is formed by the delta and b chains.

The protein resides in the cell inner membrane. It carries out the reaction ATP + H2O + 4 H(+)(in) = ADP + phosphate + 5 H(+)(out). Produces ATP from ADP in the presence of a proton gradient across the membrane. The alpha chain is a regulatory subunit. This Polaromonas naphthalenivorans (strain CJ2) protein is ATP synthase subunit alpha 1.